A 444-amino-acid chain; its full sequence is ATP-dependent protease ATPase subunit HslU (444 aa).

ATP contacts are provided by residues I18, G60–E65, D256, E322, and R394.

This sequence belongs to the ClpX chaperone family. HslU subfamily. In terms of assembly, a double ring-shaped homohexamer of HslV is capped on each side by a ring-shaped HslU homohexamer. The assembly of the HslU/HslV complex is dependent on binding of ATP.

Its subcellular location is the cytoplasm. Functionally, ATPase subunit of a proteasome-like degradation complex; this subunit has chaperone activity. The binding of ATP and its subsequent hydrolysis by HslU are essential for unfolding of protein substrates subsequently hydrolyzed by HslV. HslU recognizes the N-terminal part of its protein substrates and unfolds these before they are guided to HslV for hydrolysis. The polypeptide is ATP-dependent protease ATPase subunit HslU (Klebsiella pneumoniae subsp. pneumoniae (strain ATCC 700721 / MGH 78578)).